Reading from the N-terminus, the 480-residue chain is Probable efflux pump outer membrane protein SepC (480 aa).

The N-terminal stretch at 1–16 is a signal peptide; it reads MKTHYLSIALSVALSG. Residue cysteine 17 is the site of N-palmitoyl cysteine attachment. Cysteine 17 carries S-diacylglycerol cysteine lipidation.

It belongs to the outer membrane factor (OMF) (TC 1.B.17) family.

The protein resides in the cell outer membrane. Functionally, probable outer membrane component of the SepABC efflux pump with unknown specificity. The protein is Probable efflux pump outer membrane protein SepC (sepC) of Pseudomonas putida (strain ATCC 700007 / DSM 6899 / JCM 31910 / BCRC 17059 / LMG 24140 / F1).